The following is a 171-amino-acid chain: Large ribosomal subunit protein uL10 (171 aa).

Belongs to the universal ribosomal protein uL10 family. Part of the ribosomal stalk of the 50S ribosomal subunit. The N-terminus interacts with L11 and the large rRNA to form the base of the stalk. The C-terminus forms an elongated spine to which L12 dimers bind in a sequential fashion forming a multimeric L10(L12)X complex.

In terms of biological role, forms part of the ribosomal stalk, playing a central role in the interaction of the ribosome with GTP-bound translation factors. The polypeptide is Large ribosomal subunit protein uL10 (Methylocella silvestris (strain DSM 15510 / CIP 108128 / LMG 27833 / NCIMB 13906 / BL2)).